Reading from the N-terminus, the 417-residue chain is NADH-quinone oxidoreductase subunit D (417 aa).

Belongs to the complex I 49 kDa subunit family. As to quaternary structure, NDH-1 is composed of 14 different subunits. Subunits NuoB, C, D, E, F, and G constitute the peripheral sector of the complex.

The protein resides in the cell inner membrane. It catalyses the reaction a quinone + NADH + 5 H(+)(in) = a quinol + NAD(+) + 4 H(+)(out). Functionally, NDH-1 shuttles electrons from NADH, via FMN and iron-sulfur (Fe-S) centers, to quinones in the respiratory chain. The immediate electron acceptor for the enzyme in this species is believed to be ubiquinone. Couples the redox reaction to proton translocation (for every two electrons transferred, four hydrogen ions are translocated across the cytoplasmic membrane), and thus conserves the redox energy in a proton gradient. This Aromatoleum aromaticum (strain DSM 19018 / LMG 30748 / EbN1) (Azoarcus sp. (strain EbN1)) protein is NADH-quinone oxidoreductase subunit D.